The following is a 412-amino-acid chain: Polyferredoxin protein MvhB (412 aa).

12 4Fe-4S ferredoxin-type domains span residues 2-29, 30-57, 66-95, 96-127, 138-166, 168-197, 207-236, 237-265, 275-304, 311-344, 356-385, and 386-412; these read IVINKEDCIRCGACQGVCPTGAISVKPE, DVIYCDMCGGEPKCVEACPNDALRHEDI, KKITYSPEKCDKCGECVKVCPPGILKLVND, GKASRVPLEGFCVLCQQCVNVCPIEVIGIEGV, DKPIYIVDCVGCGLCVPECPVNAITLPKY, ESIEIDEEKCIKCGICAQTCPWNSVYISGK, ENFTLDKEECIGCNTCVEICPGGFIEPKSD, LTVSLPEICPACGLCEKLCPTDAIELEVK, EGIVYNDENCKFCGRCALNCPNEAIRVVSP, GLKKVDEKESYTICTTCGACTTVCPTGALKLVEV, NRIQYNPSLCDKCGNCVDVCPYGILKLTDD, and EKLPVKGFCILCEKCIDACRFNALLIK. Residues Cys-9, Cys-12, Cys-15, and Cys-19 each contribute to the [4Fe-4S] cluster site. 36 residues coordinate [4Fe-4S] cluster: Cys-75, Cys-78, Cys-81, Cys-85, Cys-107, Cys-110, Cys-113, Cys-117, Cys-146, Cys-149, Cys-152, Cys-156, Cys-177, Cys-180, Cys-183, Cys-187, Cys-216, Cys-219, Cys-222, Cys-226, Cys-245, Cys-248, Cys-251, Cys-255, Cys-284, Cys-287, Cys-290, Cys-294, Cys-324, Cys-327, Cys-330, Cys-334, Cys-365, Cys-368, Cys-371, and Cys-375.

The cofactor is [4Fe-4S] cluster.

The protein is Polyferredoxin protein MvhB (mvhB) of Methanothermus fervidus.